The following is a 357-amino-acid chain: UDP-N-acetylglucosamine--N-acetylmuramyl-(pentapeptide) pyrophosphoryl-undecaprenol N-acetylglucosamine transferase (357 aa).

UDP-N-acetyl-alpha-D-glucosamine-binding positions include 11–13 (TGG), Asn120, Arg161, Ser188, and Gln281.

It belongs to the glycosyltransferase 28 family. MurG subfamily.

The protein resides in the cell inner membrane. It catalyses the reaction di-trans,octa-cis-undecaprenyl diphospho-N-acetyl-alpha-D-muramoyl-L-alanyl-D-glutamyl-meso-2,6-diaminopimeloyl-D-alanyl-D-alanine + UDP-N-acetyl-alpha-D-glucosamine = di-trans,octa-cis-undecaprenyl diphospho-[N-acetyl-alpha-D-glucosaminyl-(1-&gt;4)]-N-acetyl-alpha-D-muramoyl-L-alanyl-D-glutamyl-meso-2,6-diaminopimeloyl-D-alanyl-D-alanine + UDP + H(+). It participates in cell wall biogenesis; peptidoglycan biosynthesis. Its function is as follows. Cell wall formation. Catalyzes the transfer of a GlcNAc subunit on undecaprenyl-pyrophosphoryl-MurNAc-pentapeptide (lipid intermediate I) to form undecaprenyl-pyrophosphoryl-MurNAc-(pentapeptide)GlcNAc (lipid intermediate II). In Prochlorococcus marinus (strain SARG / CCMP1375 / SS120), this protein is UDP-N-acetylglucosamine--N-acetylmuramyl-(pentapeptide) pyrophosphoryl-undecaprenol N-acetylglucosamine transferase.